The primary structure comprises 437 residues: Glutamate-1-semialdehyde 2,1-aminomutase (437 aa).

N6-(pyridoxal phosphate)lysine is present on lysine 274.

Belongs to the class-III pyridoxal-phosphate-dependent aminotransferase family. HemL subfamily. As to quaternary structure, homodimer. Requires pyridoxal 5'-phosphate as cofactor.

Its subcellular location is the cytoplasm. It catalyses the reaction (S)-4-amino-5-oxopentanoate = 5-aminolevulinate. The protein operates within porphyrin-containing compound metabolism; protoporphyrin-IX biosynthesis; 5-aminolevulinate from L-glutamyl-tRNA(Glu): step 2/2. The polypeptide is Glutamate-1-semialdehyde 2,1-aminomutase (Paracidovorax citrulli (strain AAC00-1) (Acidovorax citrulli)).